The sequence spans 421 residues: Thymidine phosphorylase (421 aa).

Belongs to the thymidine/pyrimidine-nucleoside phosphorylase family. As to quaternary structure, homodimer.

The catalysed reaction is thymidine + phosphate = 2-deoxy-alpha-D-ribose 1-phosphate + thymine. In terms of biological role, the enzymes which catalyze the reversible phosphorolysis of pyrimidine nucleosides are involved in the degradation of these compounds and in their utilization as carbon and energy sources, or in the rescue of pyrimidine bases for nucleotide synthesis. The polypeptide is Thymidine phosphorylase (deoA) (Mycoplasma pneumoniae (strain ATCC 29342 / M129 / Subtype 1) (Mycoplasmoides pneumoniae)).